The sequence spans 502 residues: Glycerol kinase (502 aa).

Thr-14 is an ADP binding site. ATP contacts are provided by Thr-14, Thr-15, and Ser-16. Thr-14 is a sn-glycerol 3-phosphate binding site. Arg-18 contacts ADP. Sn-glycerol 3-phosphate is bound by residues Arg-84, Glu-85, Tyr-136, and Asp-246. Glycerol is bound by residues Arg-84, Glu-85, Tyr-136, Asp-246, and Gln-247. The ADP site is built by Thr-268 and Gly-311. ATP is bound by residues Thr-268, Gly-311, Gln-315, and Gly-412. 2 residues coordinate ADP: Gly-412 and Asn-416.

It belongs to the FGGY kinase family. In terms of assembly, homotetramer and homodimer (in equilibrium). Heterodimer with EIIA-Glc. Binds 1 zinc ion per glycerol kinase EIIA-Glc dimer. The zinc ion is important for dimerization.

It catalyses the reaction glycerol + ATP = sn-glycerol 3-phosphate + ADP + H(+). The protein operates within polyol metabolism; glycerol degradation via glycerol kinase pathway; sn-glycerol 3-phosphate from glycerol: step 1/1. With respect to regulation, activity of this regulatory enzyme is affected by several metabolites. Allosterically and non-competitively inhibited by fructose 1,6-bisphosphate (FBP) and unphosphorylated phosphocarrier protein EIIA-Glc (III-Glc), an integral component of the bacterial phosphotransferase (PTS) system. In terms of biological role, key enzyme in the regulation of glycerol uptake and metabolism. Catalyzes the phosphorylation of glycerol to yield sn-glycerol 3-phosphate. This chain is Glycerol kinase, found in Escherichia coli (strain ATCC 8739 / DSM 1576 / NBRC 3972 / NCIMB 8545 / WDCM 00012 / Crooks).